Consider the following 384-residue polypeptide: Lipid-A-disaccharide synthase (384 aa).

The protein belongs to the LpxB family.

The enzyme catalyses a lipid X + a UDP-2-N,3-O-bis[(3R)-3-hydroxyacyl]-alpha-D-glucosamine = a lipid A disaccharide + UDP + H(+). The protein operates within bacterial outer membrane biogenesis; LPS lipid A biosynthesis. Functionally, condensation of UDP-2,3-diacylglucosamine and 2,3-diacylglucosamine-1-phosphate to form lipid A disaccharide, a precursor of lipid A, a phosphorylated glycolipid that anchors the lipopolysaccharide to the outer membrane of the cell. The polypeptide is Lipid-A-disaccharide synthase (Cellvibrio japonicus (strain Ueda107) (Pseudomonas fluorescens subsp. cellulosa)).